An 85-amino-acid chain; its full sequence is Large ribosomal subunit protein bL31B (85 aa).

It belongs to the bacterial ribosomal protein bL31 family. Type B subfamily. In terms of assembly, part of the 50S ribosomal subunit.

In Aliivibrio salmonicida (strain LFI1238) (Vibrio salmonicida (strain LFI1238)), this protein is Large ribosomal subunit protein bL31B.